The following is a 360-amino-acid chain: Alanine racemase (360 aa).

Residue Lys34 is the Proton acceptor; specific for D-alanine of the active site. An N6-(pyridoxal phosphate)lysine modification is found at Lys34. Residue Arg129 coordinates substrate. The active-site Proton acceptor; specific for L-alanine is Tyr254. Position 302 (Met302) interacts with substrate.

Belongs to the alanine racemase family. Pyridoxal 5'-phosphate is required as a cofactor.

The catalysed reaction is L-alanine = D-alanine. The protein operates within amino-acid biosynthesis; D-alanine biosynthesis; D-alanine from L-alanine: step 1/1. Its function is as follows. Catalyzes the interconversion of L-alanine and D-alanine. May also act on other amino acids. The polypeptide is Alanine racemase (alr) (Pectobacterium carotovorum subsp. carotovorum (strain PC1)).